Here is a 313-residue protein sequence, read N- to C-terminus: Antiviral protein I (313 aa).

Positions 1–22 are cleaved as a signal peptide; the sequence is MKSMLVVTISIWLILAPTSTWA. 2 disulfides stabilise this stretch: C56/C281 and C107/C128. The active site involves Y94. Position 95 (V95) interacts with substrate. Position 143 (S143) interacts with substrate. Residue Y145 is part of the active site. S197 lines the substrate pocket. Residues E198 and R201 contribute to the active site. R201 lines the substrate pocket. Positions 286 to 313 are excised as a propeptide; sequence NQNAMFPQLIMSTYYNYMVNLGDLFEGF.

Belongs to the ribosome-inactivating protein family. Type 1 RIP subfamily. Monomer. Expressed in spring leaves (at protein level). Expressed in roots (at protein level).

The enzyme catalyses Endohydrolysis of the N-glycosidic bond at one specific adenosine on the 28S rRNA.. Functionally, possesses antiviral potency. Inhibits viral infection of plants (tobacco mosaic virus). Inhibits protein synthesis. Releases both adenine and guanine from Escherichia coli rRNA in vitro. Activity on guanine is 20 times slower than that on adenine. The chain is Antiviral protein I (PAP1) from Phytolacca americana (American pokeweed).